Reading from the N-terminus, the 100-residue chain is Aspartyl/glutamyl-tRNA(Asn/Gln) amidotransferase subunit C (100 aa).

This sequence belongs to the GatC family. In terms of assembly, heterotrimer of A, B and C subunits.

It catalyses the reaction L-glutamyl-tRNA(Gln) + L-glutamine + ATP + H2O = L-glutaminyl-tRNA(Gln) + L-glutamate + ADP + phosphate + H(+). It carries out the reaction L-aspartyl-tRNA(Asn) + L-glutamine + ATP + H2O = L-asparaginyl-tRNA(Asn) + L-glutamate + ADP + phosphate + 2 H(+). In terms of biological role, allows the formation of correctly charged Asn-tRNA(Asn) or Gln-tRNA(Gln) through the transamidation of misacylated Asp-tRNA(Asn) or Glu-tRNA(Gln) in organisms which lack either or both of asparaginyl-tRNA or glutaminyl-tRNA synthetases. The reaction takes place in the presence of glutamine and ATP through an activated phospho-Asp-tRNA(Asn) or phospho-Glu-tRNA(Gln). This chain is Aspartyl/glutamyl-tRNA(Asn/Gln) amidotransferase subunit C, found in Corynebacterium aurimucosum (strain ATCC 700975 / DSM 44827 / CIP 107346 / CN-1) (Corynebacterium nigricans).